Here is a 178-residue protein sequence, read N- to C-terminus: ATP synthase subunit delta (178 aa).

This sequence belongs to the ATPase delta chain family. In terms of assembly, F-type ATPases have 2 components, F(1) - the catalytic core - and F(0) - the membrane proton channel. F(1) has five subunits: alpha(3), beta(3), gamma(1), delta(1), epsilon(1). F(0) has three main subunits: a(1), b(2) and c(10-14). The alpha and beta chains form an alternating ring which encloses part of the gamma chain. F(1) is attached to F(0) by a central stalk formed by the gamma and epsilon chains, while a peripheral stalk is formed by the delta and b chains.

It is found in the cell inner membrane. In terms of biological role, f(1)F(0) ATP synthase produces ATP from ADP in the presence of a proton or sodium gradient. F-type ATPases consist of two structural domains, F(1) containing the extramembraneous catalytic core and F(0) containing the membrane proton channel, linked together by a central stalk and a peripheral stalk. During catalysis, ATP synthesis in the catalytic domain of F(1) is coupled via a rotary mechanism of the central stalk subunits to proton translocation. Functionally, this protein is part of the stalk that links CF(0) to CF(1). It either transmits conformational changes from CF(0) to CF(1) or is implicated in proton conduction. The chain is ATP synthase subunit delta from Pseudomonas entomophila (strain L48).